We begin with the raw amino-acid sequence, 392 residues long: Multidrug resistance protein MdtL (392 aa).

12 consecutive transmembrane segments (helical) span residues 4–24, 38–58, 70–90, 95–115, 131–151, 158–178, 209–229, 246–266, 270–290, 294–314, 331–351, and 357–377; these read FLLC…MYLV, AQLH…MLFA, VAIV…QAHA, LVGR…AFAI, LLNG…HLIM, SLFY…VFIL, ILIT…SPVL, ALMA…LSLF, TLML…SLAT, LTLI…GVAM, VLGI…AIIG, and MLIG…LVVT.

The protein belongs to the major facilitator superfamily. DHA1 family. MdtL (TC 2.A.1.2.22) subfamily.

It localises to the cell inner membrane. The chain is Multidrug resistance protein MdtL from Klebsiella pneumoniae (strain 342).